The chain runs to 153 residues: Fucose mutarotase (153 aa).

The active-site Proton donor is the histidine 24. Aspartate 32 is a substrate binding site. Aspartate 69 is an active-site residue. Residues methionine 79, tyrosine 119, tyrosine 137, and asparagine 139 each contribute to the substrate site. The active site involves tyrosine 119.

The protein belongs to the RbsD / FucU family. As to quaternary structure, mainly homodimer, but also exists as homotetramer, homooctamer, and homodecamer. The homodimeric form seems catalytically inactive.

The enzyme catalyses alpha-L-fucose = beta-L-fucose. The protein operates within carbohydrate metabolism; L-fucose metabolism. Involved in the interconversion between alpha- and beta-L-fucoses. L-Fucose (6-deoxy-L-galactose) exists as alpha-L-fucose (29.5%) and beta-L-fucose (70.5%), the beta-form is metabolized through the salvage pathway. GDP-L-fucose formed either by the de novo or salvage pathways is transported into the endoplasmic reticulum, where it serves as a substrate for N- and O-glycosylations by fucosyltransferases. Fucosylated structures expressed on cell surfaces or secreted in biological fluids are believed to play a critical role in cell-cell adhesion and recognition processes. The protein is Fucose mutarotase (FUOM) of Bos taurus (Bovine).